The following is a 191-amino-acid chain: MEAADSATNNSKDTHFYGKSRAENRRRSDAMLLLFRALTFSFSLAAVVVMGTNRYRINPQLKVSWYDFEPYRYVLAVNAIICIYSFVETWLAVYTYLQGSYLLPEIFQVWFDYGHDQGFAYLLFSANSAGVAMAQLLQSGNTLIHGAYHCTEAGGYCTQARVSIALGFVAFLFLALSSLLTGLRVARWYLR.

The Cytoplasmic segment spans residues 1–29 (MEAADSATNNSKDTHFYGKSRAENRRRSD). Residues 30-50 (AMLLLFRALTFSFSLAAVVVM) traverse the membrane as a helical segment. At 51–72 (GTNRYRINPQLKVSWYDFEPYR) the chain is on the extracellular side. Residues 73–93 (YVLAVNAIICIYSFVETWLAV) traverse the membrane as a helical segment. Topologically, residues 94–116 (YTYLQGSYLLPEIFQVWFDYGHD) are cytoplasmic. A helical transmembrane segment spans residues 117–137 (QGFAYLLFSANSAGVAMAQLL). Over 138-161 (QSGNTLIHGAYHCTEAGGYCTQAR) the chain is Extracellular. The chain crosses the membrane as a helical span at residues 162–182 (VSIALGFVAFLFLALSSLLTG). The Cytoplasmic portion of the chain corresponds to 183-191 (LRVARWYLR).

This sequence belongs to the Casparian strip membrane proteins (CASP) family. As to quaternary structure, homodimer and heterodimers.

It is found in the cell membrane. The chain is CASP-like protein 4C2 from Physcomitrium patens (Spreading-leaved earth moss).